A 673-amino-acid polypeptide reads, in one-letter code: eEF1A lysine and N-terminal methyltransferase homolog (673 aa).

It belongs to the methyltransferase superfamily.

It catalyses the reaction L-lysyl-[protein] + S-adenosyl-L-methionine = N(6)-methyl-L-lysyl-[protein] + S-adenosyl-L-homocysteine + H(+). The catalysed reaction is N(6)-methyl-L-lysyl-[protein] + S-adenosyl-L-methionine = N(6),N(6)-dimethyl-L-lysyl-[protein] + S-adenosyl-L-homocysteine + H(+). It carries out the reaction N-terminal glycyl-L-lysyl-L-glutamyl-[protein] + 3 S-adenosyl-L-methionine = N-terminal N,N,N-trimethyl-glycyl-L-lysyl-L-glutamyl-[protein] + 3 S-adenosyl-L-homocysteine + 3 H(+). In terms of biological role, dual methyltransferase. It catalyzes N-terminal methylation of target proteins via its C-terminus. It catalyzes dimethylation on lysine residues of target proteins via its N-terminus. The polypeptide is eEF1A lysine and N-terminal methyltransferase homolog (Drosophila pseudoobscura pseudoobscura (Fruit fly)).